The following is a 356-amino-acid chain: S-adenosylmethionine:tRNA ribosyltransferase-isomerase (356 aa).

Belongs to the QueA family. As to quaternary structure, monomer.

The protein resides in the cytoplasm. The catalysed reaction is 7-aminomethyl-7-carbaguanosine(34) in tRNA + S-adenosyl-L-methionine = epoxyqueuosine(34) in tRNA + adenine + L-methionine + 2 H(+). The protein operates within tRNA modification; tRNA-queuosine biosynthesis. Its function is as follows. Transfers and isomerizes the ribose moiety from AdoMet to the 7-aminomethyl group of 7-deazaguanine (preQ1-tRNA) to give epoxyqueuosine (oQ-tRNA). The protein is S-adenosylmethionine:tRNA ribosyltransferase-isomerase of Xanthomonas campestris pv. campestris (strain 8004).